A 418-amino-acid polypeptide reads, in one-letter code: Serine--tRNA ligase (418 aa).

L-serine is bound at residue 226-228; sequence TSE. ATP is bound by residues 257–259 and Val-273; that span reads RRE. L-serine is bound at residue Glu-280. 344 to 347 serves as a coordination point for ATP; sequence ELTS. Residue Thr-379 participates in L-serine binding.

The protein belongs to the class-II aminoacyl-tRNA synthetase family. Type-1 seryl-tRNA synthetase subfamily. In terms of assembly, homodimer. The tRNA molecule binds across the dimer.

It is found in the cytoplasm. It catalyses the reaction tRNA(Ser) + L-serine + ATP = L-seryl-tRNA(Ser) + AMP + diphosphate + H(+). The catalysed reaction is tRNA(Sec) + L-serine + ATP = L-seryl-tRNA(Sec) + AMP + diphosphate + H(+). Its pathway is aminoacyl-tRNA biosynthesis; selenocysteinyl-tRNA(Sec) biosynthesis; L-seryl-tRNA(Sec) from L-serine and tRNA(Sec): step 1/1. Catalyzes the attachment of serine to tRNA(Ser). Is also able to aminoacylate tRNA(Sec) with serine, to form the misacylated tRNA L-seryl-tRNA(Sec), which will be further converted into selenocysteinyl-tRNA(Sec). The chain is Serine--tRNA ligase from Mycobacteroides abscessus (strain ATCC 19977 / DSM 44196 / CCUG 20993 / CIP 104536 / JCM 13569 / NCTC 13031 / TMC 1543 / L948) (Mycobacterium abscessus).